An 86-amino-acid chain; its full sequence is Weak neurotoxin 6 (86 aa).

Residues 1–21 (MKTLLLTLVVVTIVCLDLGYT) form the signal peptide. 5 cysteine pairs are disulfide-bonded: Cys-24-Cys-45, Cys-27-Cys-32, Cys-38-Cys-63, Cys-67-Cys-78, and Cys-79-Cys-84.

It belongs to the three-finger toxin family. Ancestral subfamily. Orphan group II sub-subfamily. Expressed by the venom gland.

The protein resides in the secreted. In terms of biological role, binds with low affinity to muscular (alpha-1-beta-1-delta-epsilon/CHRNA1-CHRNB1-CHRND-CHRNE) and very low affinity to neuronal (alpha-7/CHRNA7) nicotinic acetylcholine receptor (nAChR). In Naja sputatrix (Malayan spitting cobra), this protein is Weak neurotoxin 6.